The sequence spans 406 residues: MAKIKVKNPVVEIDGDEMTRIIWEWIRERLILPYLDVDLKYYDLSVEKRDETSDQITIDAANAIKEYGVGVKCATITPDEARVEEFGLKKMWKSPNGTIRNILGGVVFREPIVIKNVPRLVPGWTDPIVVGRHAFGDQYKATDFKVPGAGTLTMKWVGTNGEELEYEVFEFPSAGVAMGMYNLDESIRDFAKASFNYGLNRGWPVYLSTKNTILKAYDGRFKDLFQEVFDAEFADKFKAAGIVYEHRLIDDMVASALKWSGKFVWACKNYDGDVQSDTVAQGFGSLGLMTSVLLSPDGKTVEAEAAHGTVTRHYRQHQQGKATSTNPIASIFAWTQGLSFRGKFDDTPDVVKFAETLEQVCIKTVEGGAMTKDLALLIGPDQAWMTTEQFFEAIRVNLEAEMAKWA.

NADP(+)-binding residues include Lys-72, Thr-75, Thr-77, and Arg-82. Residues Ser-94, Asn-96, Arg-100, Glu-110, and Arg-132 each coordinate D-threo-isocitrate. Residues Asp-250, Asp-273, and Asp-277 each contribute to the Mn(2+) site. Gly-308, Thr-309, Val-310, His-313, and Asn-326 together coordinate NADP(+).

It belongs to the isocitrate and isopropylmalate dehydrogenases family. Homodimer. Requires Mg(2+) as cofactor. Mn(2+) serves as cofactor.

The catalysed reaction is D-threo-isocitrate + NADP(+) = 2-oxoglutarate + CO2 + NADPH. In terms of biological role, catalyzes the oxidative decarboxylation of isocitrate to 2-oxoglutarate and carbon dioxide with the concomitant reduction of NADP(+). This Sphingobium yanoikuyae (Sphingomonas yanoikuyae) protein is Isocitrate dehydrogenase [NADP] (icd).